Reading from the N-terminus, the 30-residue chain is Dendrotoxin A (30 aa).

An intrachain disulfide couples C3 to C22.

The protein belongs to the three-finger toxin family. Short-chain subfamily. Acn-esterase inhibitor sub-subfamily. Contains 4 disulfide bonds. In terms of tissue distribution, expressed by the venom gland.

The protein resides in the secreted. Its function is as follows. Inhibits acetylcholinesterase. Has been described to inhibit both the slowly and the rapidly inactivating phases of potassium efflux. The sequence is that of Dendrotoxin A from Dendroaspis angusticeps (Eastern green mamba).